A 444-amino-acid polypeptide reads, in one-letter code: Cadaverine/lysine antiporter (444 aa).

Transmembrane regions (helical) follow at residues 7–27, 35–55, 95–115, 123–143, 149–169, 193–213, 222–242, 273–293, 323–343, 354–374, 384–404, and 405–425; these read IGLF…GIAL, IGGI…SLAY, IGNL…FPVL, IACI…GTWV, IGLV…WHWF, ILLC…TGMV, LATM…TQVL, LVSA…MMLV, LLLA…MNSA, LTGI…VDLI, FVSL…LMGA, and SSFE…FYAR.

Belongs to the amino acid-polyamine-organocation (APC) superfamily. Basic amino acid/polyamine antiporter (APA) (TC 2.A.3.2) family.

The protein resides in the cell inner membrane. The enzyme catalyses cadaverine(in) + L-lysine(out) = cadaverine(out) + L-lysine(in). Its function is as follows. Under acidic conditions, in the presence of lysine, functions as a cadaverine:lysine antiporter that facilitates the excretion of cadaverine and the uptake of lysine. The polypeptide is Cadaverine/lysine antiporter (cadB) (Escherichia coli O157:H7).